We begin with the raw amino-acid sequence, 237 residues long: Undecaprenyl-diphosphatase (237 aa).

The next 7 helical transmembrane spans lie at 38–58 (QTAVLHLGTLVSVVLFAFDGI), 65–85 (WRIILNLIVSTIPAGVFGVLF), 92–112 (LFSSPRFLPLFFSVTALILMF), 126–146 (MSFLDALLVGIAQLFALFPGI), 166–186 (ALQYSFLMSIPVVLGAGILGL), 191–211 (VTILAPIFAFLSGLFALYVLS), and 217–237 (GKIWQFSYYCLFVAILSYLVG).

The protein belongs to the UppP family.

Its subcellular location is the cell inner membrane. It catalyses the reaction di-trans,octa-cis-undecaprenyl diphosphate + H2O = di-trans,octa-cis-undecaprenyl phosphate + phosphate + H(+). In terms of biological role, catalyzes the dephosphorylation of undecaprenyl diphosphate (UPP). Confers resistance to bacitracin. The polypeptide is Undecaprenyl-diphosphatase (Thermotoga sp. (strain RQ2)).